A 126-amino-acid chain; its full sequence is Histone H2B (126 aa).

Low complexity predominate over residues 1 to 12; the sequence is MPEPAKSAPAPK. Positions 1–36 are disordered; the sequence is MPEPAKSAPAPKKGSKKAVTKTQKKGDKKRKKSRKE. 2 positions are modified to N6-acetyllysine: lysine 6 and lysine 13. Residues 13–34 show a composition bias toward basic residues; the sequence is KGSKKAVTKTQKKGDKKRKKSR. Residue serine 15 is modified to Phosphoserine. An N6-acetyllysine mark is found at lysine 16 and lysine 21. Lysine 121 is covalently cross-linked (Glycyl lysine isopeptide (Lys-Gly) (interchain with G-Cter in ubiquitin)).

The protein belongs to the histone H2B family. In terms of assembly, the nucleosome is a histone octamer containing two molecules each of H2A, H2B, H3 and H4 assembled in one H3-H4 heterotetramer and two H2A-H2B heterodimers. The octamer wraps approximately 147 bp of DNA. Monoubiquitination of Lys-121 by the RNF20/40 complex gives a specific tag for epigenetic transcriptional activation and is also prerequisite for histone H3 'Lys-4' and 'Lys-79' methylation. In terms of processing, phosphorylated on Ser-15 during apoptosis; which facilitates apoptotic chromatin condensation.

The protein localises to the nucleus. It localises to the chromosome. Core component of nucleosome. Nucleosomes wrap and compact DNA into chromatin, limiting DNA accessibility to the cellular machineries which require DNA as a template. Histones thereby play a central role in transcription regulation, DNA repair, DNA replication and chromosomal stability. DNA accessibility is regulated via a complex set of post-translational modifications of histones, also called histone code, and nucleosome remodeling. The sequence is that of Histone H2B from Cairina moschata (Muscovy duck).